A 117-amino-acid polypeptide reads, in one-letter code: Hydrogenase maturation factor HypA (117 aa).

Residue H2 coordinates Ni(2+). Zn(2+) contacts are provided by C73, C76, C89, and C92.

It belongs to the HypA/HybF family.

Involved in the maturation of [NiFe] hydrogenases. Required for nickel insertion into the metal center of the hydrogenase. This is Hydrogenase maturation factor HypA from Chlorobium luteolum (strain DSM 273 / BCRC 81028 / 2530) (Pelodictyon luteolum).